The sequence spans 453 residues: uncharacterized protein (453 aa).

Residues 276–437 (IAQTKQIKAL…TKQIVRGSST (162 aa)) form the YrdC-like domain.

This is an uncharacterized protein from Mycoplasma pneumoniae (strain ATCC 29342 / M129 / Subtype 1) (Mycoplasmoides pneumoniae).